The primary structure comprises 150 residues: Flagellar assembly factor FliW (150 aa).

Belongs to the FliW family. Interacts with translational regulator CsrA and flagellin(s).

It is found in the cytoplasm. Acts as an anti-CsrA protein, binds CsrA and prevents it from repressing translation of its target genes, one of which is flagellin. Binds to flagellin and participates in the assembly of the flagellum. The polypeptide is Flagellar assembly factor FliW (Leptospira borgpetersenii serovar Hardjo-bovis (strain JB197)).